A 246-amino-acid chain; its full sequence is UDP-N-acetyl-D-mannosaminuronic acid transferase (246 aa).

This sequence belongs to the glycosyltransferase 26 family.

The enzyme catalyses UDP-N-acetyl-alpha-D-mannosaminouronate + N-acetyl-alpha-D-glucosaminyl-di-trans,octa-cis-undecaprenyl diphosphate = beta-D-ManNAcA-(1-&gt;4)-alpha-D-GlcNAc-di-trans,octa-cis-undecaprenyl diphosphate + UDP + H(+). The protein operates within bacterial outer membrane biogenesis; enterobacterial common antigen biosynthesis. Its function is as follows. Catalyzes the synthesis of Und-PP-GlcNAc-ManNAcA (Lipid II), the second lipid-linked intermediate involved in enterobacterial common antigen (ECA) synthesis. The polypeptide is UDP-N-acetyl-D-mannosaminuronic acid transferase (Escherichia fergusonii (strain ATCC 35469 / DSM 13698 / CCUG 18766 / IAM 14443 / JCM 21226 / LMG 7866 / NBRC 102419 / NCTC 12128 / CDC 0568-73)).